The sequence spans 94 residues: Small ribosomal subunit protein bS18 (94 aa).

Belongs to the bacterial ribosomal protein bS18 family. As to quaternary structure, part of the 30S ribosomal subunit. Forms a tight heterodimer with protein bS6.

Binds as a heterodimer with protein bS6 to the central domain of the 16S rRNA, where it helps stabilize the platform of the 30S subunit. The polypeptide is Small ribosomal subunit protein bS18 (Albidiferax ferrireducens (strain ATCC BAA-621 / DSM 15236 / T118) (Rhodoferax ferrireducens)).